We begin with the raw amino-acid sequence, 624 residues long: tRNA uridine 5-carboxymethylaminomethyl modification enzyme MnmG (624 aa).

FAD-binding positions include 14–19 (GGGHAG), Val126, and Ser181. NAD(+) is bound at residue 273-287 (GPRYCPSIEDKVVRF). Gln370 contacts FAD.

It belongs to the MnmG family. As to quaternary structure, homodimer. Heterotetramer of two MnmE and two MnmG subunits. FAD serves as cofactor.

It localises to the cytoplasm. In terms of biological role, NAD-binding protein involved in the addition of a carboxymethylaminomethyl (cmnm) group at the wobble position (U34) of certain tRNAs, forming tRNA-cmnm(5)s(2)U34. The protein is tRNA uridine 5-carboxymethylaminomethyl modification enzyme MnmG of Geotalea uraniireducens (strain Rf4) (Geobacter uraniireducens).